The sequence spans 1221 residues: DNA-directed RNA polymerase subunit beta' (1221 aa).

The Zn(2+) site is built by Cys60, Cys62, Cys75, and Cys78. 3 residues coordinate Mg(2+): Asp449, Asp451, and Asp453. Residues Cys821, Cys896, Cys903, and Cys906 each coordinate Zn(2+).

The protein belongs to the RNA polymerase beta' chain family. In terms of assembly, the RNAP catalytic core consists of 2 alpha, 1 beta, 1 beta' and 1 omega subunit. When a sigma factor is associated with the core the holoenzyme is formed, which can initiate transcription. It depends on Mg(2+) as a cofactor. Zn(2+) is required as a cofactor.

The enzyme catalyses RNA(n) + a ribonucleoside 5'-triphosphate = RNA(n+1) + diphosphate. DNA-dependent RNA polymerase catalyzes the transcription of DNA into RNA using the four ribonucleoside triphosphates as substrates. The chain is DNA-directed RNA polymerase subunit beta' from Lactobacillus delbrueckii subsp. bulgaricus (strain ATCC 11842 / DSM 20081 / BCRC 10696 / JCM 1002 / NBRC 13953 / NCIMB 11778 / NCTC 12712 / WDCM 00102 / Lb 14).